Reading from the N-terminus, the 1052-residue chain is MQVMPPTPGGGPSRLFILRPVATTLFMIAILLAGIIGYRALPVSALPEVDYPTIQVVTLYPGASPDVVTSSITAPLERQFGQMSGLKQMASQSSGGASVITLQFQLTLPLDVAEQEVQAAINAATNLLPSDLPYPPIYNKVNPADPPILTLAVTATAIPMTQVEDMVETRIAQKISQVTGVGLVTLSGGQRPAVRVKLNAPAVAALGLDSETIRTAISNANVNSAKGSLDGPTRSVTLSANDQMKSAEEYRDLIIAYQNGAPIRLQDVATIEQGAENNKLAAWANTQSAIVLNIQRQPGVNVIATADSIREMLPELIKSLPKSVDVKVLTDRTSTIRASVNDVQFELLLAIALVVMVIYLFLRNAAATIIPSIAVPLSLVGTFAAMYFLGFSINNLTLMALTIATGFVVDDAIVVIENISRYIEKGEKPLDAALKGAGEIGFTIISLTFSLIAVLIPLLFMEDIVGRLFREFAVTLAVAILISAVVSLTLTPMMCARMLSYESLRKQNRLSRASEKFFDWVIAHYAVALKKVLNHPWLTLSVAFSTLVLTVILYLLIPKGFFPLQDNGLIQGTLEAPQSVSFSNMAERQQQVAAIILKDPAVESLTSFVGVDGTNATLNNGRLQINLKPLSERDDRIPQIITRLQESVSGVPGIKLYLQPVQDLTIDTQLSRTQYQFTLQATSLEELSTWVPKLVNELQQKAPFQDVTSDWQDQGLVAFVNVDRDSASRLGITMAAIDNALYNAFGQRLISTIYTQSNQYRVVLEHDVQATPGLAAFNDIRLTGSDGKGVPLNSIATIEERFGPLSINHLNQFPSATVSFNLAQGYSLGEAVAAVTLAEKEIQLPADITTRFQGSTLAFQAALGSTLWLIIAAIVAMYIVLGVLYESFIHPITILSTLPTAGVGALLALMLTGNELDVIAIIGIILLIGIVKKNAIMMIDFALAAERDQGMTPYDAIYQACLLRFRPILMTTLAALFGALPLMLSTGVGAELRQPLGVCMVGGLIVSQVLTLFTTPVIYLLFDKLARNTRGKNRHRDEDIDSSELLNGQEPQ.

Helical transmembrane passes span 15–37 (LFILRPVATTLFMIAILLAGIIG), 345–362 (FELLLAIALVVMVIYLFL), 367–389 (ATIIPSIAVPLSLVGTFAAMYFL), 396–418 (LTLMALTIATGFVVDDAIVVIEN), 438–460 (GEIGFTIISLTFSLIAVLIPLLF), 472–494 (FAVTLAVAILISAVVSLTLTPMM), 535–557 (HPWLTLSVAFSTLVLTVILYLLI), 867–889 (LWLIIAAIVAMYIVLGVLYESFI), 909–931 (LMLTGNELDVIAIIGIILLIGIV), 968–990 (ILMTTLAALFGALPLMLSTGVGA), and 1000–1022 (MVGGLIVSQVLTLFTTPVIYLLF). The interval 1032-1052 (KNRHRDEDIDSSELLNGQEPQ) is disordered.

It belongs to the resistance-nodulation-cell division (RND) (TC 2.A.6) family. MdtB subfamily. In terms of assembly, part of a tripartite efflux system composed of MdtA, MdtB and MdtC. MdtB forms a heteromultimer with MdtC.

The protein localises to the cell inner membrane. The protein is Multidrug resistance protein MdtB of Yersinia pseudotuberculosis serotype I (strain IP32953).